A 278-amino-acid chain; its full sequence is UPF0750 membrane protein YxkD (278 aa).

A run of 5 helical transmembrane segments spans residues 8–28 (VLML…FAIP), 46–66 (LFQW…LLIG), 77–97 (YTII…GWSI), 101–121 (ELII…GMII), and 145–165 (ISYA…FIIG).

It belongs to the UPF0750 family.

The protein resides in the cell membrane. The protein is UPF0750 membrane protein YxkD (yxkD) of Bacillus subtilis (strain 168).